The sequence spans 311 residues: HPr kinase/phosphorylase (311 aa).

Active-site residues include H138 and K159. 153-160 (GSSGIGKS) lines the ATP pocket. A Mg(2+)-binding site is contributed by S160. D177 (proton acceptor; for phosphorylation activity. Proton donor; for dephosphorylation activity) is an active-site residue. Residues 201–210 (LEIRGVGIIN) are important for the catalytic mechanism of both phosphorylation and dephosphorylation. E202 contributes to the Mg(2+) binding site. R243 is an active-site residue. An important for the catalytic mechanism of dephosphorylation region spans residues 264–269 (PVRPGR).

This sequence belongs to the HPrK/P family. As to quaternary structure, homohexamer. Mg(2+) is required as a cofactor.

The catalysed reaction is [HPr protein]-L-serine + ATP = [HPr protein]-O-phospho-L-serine + ADP + H(+). The enzyme catalyses [HPr protein]-O-phospho-L-serine + phosphate + H(+) = [HPr protein]-L-serine + diphosphate. Catalyzes the ATP- as well as the pyrophosphate-dependent phosphorylation of a specific serine residue in HPr, a phosphocarrier protein of the phosphoenolpyruvate-dependent sugar phosphotransferase system (PTS). HprK/P also catalyzes the pyrophosphate-producing, inorganic phosphate-dependent dephosphorylation (phosphorolysis) of seryl-phosphorylated HPr (P-Ser-HPr). The two antagonistic activities of HprK/P are regulated by several intracellular metabolites, which change their concentration in response to the absence or presence of rapidly metabolisable carbon sources (glucose, fructose, etc.) in the growth medium. Therefore, by controlling the phosphorylation state of HPr, HPrK/P is a sensor enzyme that plays a major role in the regulation of carbon metabolism and sugar transport: it mediates carbon catabolite repression (CCR), and regulates PTS-catalyzed carbohydrate uptake and inducer exclusion. This Brevibacillus brevis (strain 47 / JCM 6285 / NBRC 100599) protein is HPr kinase/phosphorylase.